We begin with the raw amino-acid sequence, 259 residues long: Glutamate racemase (259 aa).

Residues 9-10 (DS) and 41-42 (YG) contribute to the substrate site. Residue cysteine 73 is the Proton donor/acceptor of the active site. 74-75 (NT) lines the substrate pocket. Cysteine 183 (proton donor/acceptor) is an active-site residue. Substrate is bound at residue 184 to 185 (TH).

This sequence belongs to the aspartate/glutamate racemases family.

It carries out the reaction L-glutamate = D-glutamate. It functions in the pathway cell wall biogenesis; peptidoglycan biosynthesis. Functionally, provides the (R)-glutamate required for cell wall biosynthesis. The protein is Glutamate racemase of Shewanella frigidimarina (strain NCIMB 400).